We begin with the raw amino-acid sequence, 411 residues long: MSLLDGLASSPRAPLQSSKARMKKLPKKSQNEKYRLKYLRLRKAAKATVFENAAICDEIARLEEKFLKAKEERRYLLKKLLQLQALTEGEVQAAAPSHSSSLPLTYGVASSVGTIQGAGPISGPSTGAEEPFGKKTKKEKKEKGKENNKLEVLKKTCKKKKMAGGARKLVQPIALDPSGRPVFPIGLGGLTVYSLGEIITDRPGFHDESAIYPVGYCSTRIYASMKCPDQKCLYTCQIKDGGVQPQFEIVPEDDPQNAIVSSSADACHAELLRTISTTMGKLMPNLLPAGADFFGFSHPAIHNLIQSCPGARKCINYQWVKFDVCKPGDGQLPEGLPENDAAMSFEAFQRQIFDEDQNDPLLPGSLDLPELQPAAFVSSYQPMYLTHEPLVDTHLQHLKSPSQGSPIQSSD.

Disordered stretches follow at residues 1 to 29 (MSLLDGLASSPRAPLQSSKARMKKLPKKS) and 119 to 146 (GPISGPSTGAEEPFGKKTKKEKKEKGKE). At S2 the chain carries N-acetylserine. S10 is subject to Phosphoserine. The region spanning 182–241 (VFPIGLGGLTVYSLGEIITDRPGFHDESAIYPVGYCSTRIYASMKCPDQKCLYTCQIKDG) is the FYR N-terminal domain. The FYR C-terminal domain occupies 242-321 (GVQPQFEIVP…RKCINYQWVK (80 aa)).

Belongs to the TBRG1 family. Interacts with CDKN2A and MDM2. In terms of processing, ubiquitinated; mediated by MDM2 and leading to its subsequent proteasomal degradation. In terms of tissue distribution, widely expressed at low levels in most tissues, with highest levels in pancreas, lung and liver. Expression is decreased in primary tumors including lung, liver, breast, pancreas and kidney carcinomas, chronic lymphocytic leukemia and diffuse large B-cell lymphoma.

It is found in the nucleus. Its function is as follows. Acts as a growth inhibitor. Can activate p53/TP53, causes G1 arrest and collaborates with CDKN2A to restrict proliferation, but does not require either protein to inhibit DNA synthesis. Redistributes CDKN2A into the nucleoplasm. Involved in maintaining chromosomal stability. The chain is Transforming growth factor beta regulator 1 (TBRG1) from Homo sapiens (Human).